Consider the following 907-residue polypeptide: Envelope glycoprotein B (907 aa).

Positions M1–S24 are cleaved as a signal peptide. At S25–P751 the chain is on the virion surface side. Positions R29–T62 are disordered. A compositionally biased stretch (low complexity) spans H41–T62. N-linked (GlcNAc...) asparagine; by host glycans are attached at residues N68, N73, and N85. Cystine bridges form between C94-C551, C111-C507, C185-C250, and C344-C391. The interval S152–T158 is involved in fusion and/or binding to host membrane. N208 is a glycosylation site (N-linked (GlcNAc...) asparagine; by host). The involved in fusion and/or binding to host membrane stretch occupies residues G237–E244. Residues N281, N286, N302, N341, N383, N405, N409, N417, N447, N452, N456, N466, N555, and N586 are each glycosylated (N-linked (GlcNAc...) asparagine; by host). A disulfide bridge connects residues C574 and C611. Residues V697–K749 are hydrophobic membrane proximal region. A helical transmembrane segment spans residues F752 to Y772. The Intravirion portion of the chain corresponds to T773–V907. 2 stretches are compositionally biased toward polar residues: residues V798–A810 and R860–D877. Disordered regions lie at residues V798–P838 and A857–V907. Basic and acidic residues predominate over residues K878–R887. An Internalization motif motif is present at residues Y895–L898.

It belongs to the herpesviridae glycoprotein B family. Homotrimer; disulfide-linked. Binds to heparan sulfate proteoglycans. Interacts with gH/gL heterodimer. Post-translationally, a proteolytic cleavage by host furin generates two subunits that remain linked by disulfide bonds.

It localises to the virion membrane. The protein resides in the host cell membrane. The protein localises to the host endosome membrane. Its subcellular location is the host Golgi apparatus membrane. Its function is as follows. Envelope glycoprotein that forms spikes at the surface of virion envelope. Essential for the initial attachment to heparan sulfate moieties of the host cell surface proteoglycans. Involved in fusion of viral and cellular membranes leading to virus entry into the host cell. Following initial binding to its host receptors, membrane fusion is mediated by the fusion machinery composed at least of gB and the heterodimer gH/gL. May be involved in the fusion between the virion envelope and the outer nuclear membrane during virion egress. This Human cytomegalovirus (strain Merlin) (HHV-5) protein is Envelope glycoprotein B.